Here is a 434-residue protein sequence, read N- to C-terminus: MKVDLSITAVKAREILDSRGNPTVEVEVVVNDEFVGRAAVPSGASTGMFEAVELRDGDKKRYMGKGVLKAVENVNEVIAPEIIGMNALNQVEIDRLMIELDGTENKSKLGANAILGVSLAVAKAAANALGLPLYQYIGGVNAKYLPVPMMNILNGGKHADNSVDLQEFMIMPVGAKSFSEALRMCAETFHQLRNVLKARGYNTTVGDEGGFAPNLKSNEEPLEVIVEAIEKAGYTPGKDIAIALDPATSELYNEEDGKYHFEREGKVRTKEEMVEFWVKLVEKYPIVSIEDGVAEEDWEGWKMLTEALGKKIQLVGDDLFVTNTKRLAKGIELGVANSILIKLNQIGTLTETLEAIEMANRAGYTAVVSHRSGETEDTTIADLVVAVNAGQIKTGAPSRTDRVAKYNQLLRIEEELGSIAVYPGMNAFFNLKKK.

A (2R)-2-phosphoglycerate-binding site is contributed by Q166. E208 serves as the catalytic Proton donor. D245, E290, and D317 together coordinate Mg(2+). (2R)-2-phosphoglycerate contacts are provided by K342, R371, S372, and K393. The Proton acceptor role is filled by K342.

It belongs to the enolase family. Mg(2+) is required as a cofactor.

The protein localises to the cytoplasm. It is found in the secreted. Its subcellular location is the cell surface. The catalysed reaction is (2R)-2-phosphoglycerate = phosphoenolpyruvate + H2O. It participates in carbohydrate degradation; glycolysis; pyruvate from D-glyceraldehyde 3-phosphate: step 4/5. In terms of biological role, catalyzes the reversible conversion of 2-phosphoglycerate (2-PG) into phosphoenolpyruvate (PEP). It is essential for the degradation of carbohydrates via glycolysis. This Caldicellulosiruptor saccharolyticus (strain ATCC 43494 / DSM 8903 / Tp8T 6331) protein is Enolase.